We begin with the raw amino-acid sequence, 320 residues long: Ferrochelatase (320 aa).

Fe cation contacts are provided by H194 and E275.

Belongs to the ferrochelatase family. As to quaternary structure, monomer.

It is found in the cytoplasm. The catalysed reaction is heme b + 2 H(+) = protoporphyrin IX + Fe(2+). It functions in the pathway porphyrin-containing compound metabolism; protoheme biosynthesis; protoheme from protoporphyrin-IX: step 1/1. Catalyzes the ferrous insertion into protoporphyrin IX. The polypeptide is Ferrochelatase (Escherichia coli (strain 55989 / EAEC)).